The primary structure comprises 242 residues: Uridylate kinase (242 aa).

An ATP-binding site is contributed by 11 to 14 (KLSG). Residue Gly-53 coordinates UMP. Residues Gly-54 and Arg-58 each contribute to the ATP site. UMP-binding positions include Asp-73 and 134-141 (SGNPFFTT). Residues Thr-161, Tyr-167, and Asp-170 each contribute to the ATP site.

It belongs to the UMP kinase family. In terms of assembly, homohexamer.

The protein localises to the cytoplasm. It catalyses the reaction UMP + ATP = UDP + ADP. It functions in the pathway pyrimidine metabolism; CTP biosynthesis via de novo pathway; UDP from UMP (UMPK route): step 1/1. With respect to regulation, inhibited by UTP. Catalyzes the reversible phosphorylation of UMP to UDP. In Thermosynechococcus vestitus (strain NIES-2133 / IAM M-273 / BP-1), this protein is Uridylate kinase.